Reading from the N-terminus, the 445-residue chain is Phosphoglucosamine mutase (445 aa).

The Phosphoserine intermediate role is filled by serine 102. Mg(2+)-binding residues include serine 102, aspartate 241, aspartate 243, and aspartate 245. Serine 102 is modified (phosphoserine).

It belongs to the phosphohexose mutase family. It depends on Mg(2+) as a cofactor. Post-translationally, activated by phosphorylation.

The enzyme catalyses alpha-D-glucosamine 1-phosphate = D-glucosamine 6-phosphate. Catalyzes the conversion of glucosamine-6-phosphate to glucosamine-1-phosphate. In Pectobacterium carotovorum subsp. carotovorum (strain PC1), this protein is Phosphoglucosamine mutase.